The chain runs to 90 residues: Translation initiation factor IF-1 (90 aa).

In terms of domain architecture, S1-like spans 15-90 (KKQKRKKEEV…TLGRIVFRHK (76 aa)).

The protein belongs to the IF-1 family. Component of the 30S ribosomal translation pre-initiation complex which assembles on the 30S ribosome in the order IF-2 and IF-3, IF-1 and N-formylmethionyl-tRNA(fMet); mRNA recruitment can occur at any time during PIC assembly.

It localises to the cytoplasm. In terms of biological role, one of the essential components for the initiation of protein synthesis. Stabilizes the binding of IF-2 and IF-3 on the 30S subunit to which N-formylmethionyl-tRNA(fMet) subsequently binds. Helps modulate mRNA selection, yielding the 30S pre-initiation complex (PIC). Upon addition of the 50S ribosomal subunit IF-1, IF-2 and IF-3 are released leaving the mature 70S translation initiation complex. This is Translation initiation factor IF-1 from Mycoplasma sp.